The following is a 43-amino-acid chain: Cytochrome b559 subunit beta (43 aa).

Residues 18-34 traverse the membrane as a helical segment; that stretch reads WLAIHGLAIPTVFFLGG. Residue His22 participates in heme binding.

Belongs to the PsbE/PsbF family. As to quaternary structure, heterodimer of an alpha subunit and a beta subunit. PSII is composed of 1 copy each of membrane proteins PsbA, PsbB, PsbC, PsbD, PsbE, PsbF, PsbH, PsbI, PsbJ, PsbK, PsbL, PsbM, PsbT, PsbX, PsbY, PsbZ, Psb30/Ycf12, at least 3 peripheral proteins of the oxygen-evolving complex and a large number of cofactors. It forms dimeric complexes. Heme b serves as cofactor.

It localises to the plastid. The protein localises to the chloroplast thylakoid membrane. This b-type cytochrome is tightly associated with the reaction center of photosystem II (PSII). PSII is a light-driven water:plastoquinone oxidoreductase that uses light energy to abstract electrons from H(2)O, generating O(2) and a proton gradient subsequently used for ATP formation. It consists of a core antenna complex that captures photons, and an electron transfer chain that converts photonic excitation into a charge separation. In Trieres chinensis (Marine centric diatom), this protein is Cytochrome b559 subunit beta.